A 425-amino-acid chain; its full sequence is Glutamate-1-semialdehyde 2,1-aminomutase (425 aa).

Lysine 265 is subject to N6-(pyridoxal phosphate)lysine.

This sequence belongs to the class-III pyridoxal-phosphate-dependent aminotransferase family. HemL subfamily. As to quaternary structure, homodimer. Pyridoxal 5'-phosphate serves as cofactor.

The protein resides in the cytoplasm. The enzyme catalyses (S)-4-amino-5-oxopentanoate = 5-aminolevulinate. Its pathway is porphyrin-containing compound metabolism; protoporphyrin-IX biosynthesis; 5-aminolevulinate from L-glutamyl-tRNA(Glu): step 2/2. In Desulfatibacillum aliphaticivorans, this protein is Glutamate-1-semialdehyde 2,1-aminomutase.